Here is a 135-residue protein sequence, read N- to C-terminus: CDGSH iron-sulfur domain-containing protein 2B (135 aa).

The Lumenal portion of the chain corresponds to 1 to 37 (MVLETISKIIKTQLPAYLKKFPLPETIGGFARLTVLD). The chain crosses the membrane as a helical span at residues 38–60 (WLRLLPLLGILALLGYLTIRPFL). The Cytoplasmic segment spans residues 61 to 135 (PKKKKQKDSL…GPLILKKKIL (75 aa)). [2Fe-2S] cluster contacts are provided by Cys-99, Cys-101, Cys-110, and His-114.

This sequence belongs to the CISD protein family. CISD2 subfamily. Homodimer. [2Fe-2S] cluster is required as a cofactor.

Its subcellular location is the endoplasmic reticulum membrane. The protein localises to the mitochondrion outer membrane. In terms of biological role, regulator of autophagy that contributes to antagonize becn1-mediated cellular autophagy at the endoplasmic reticulum. Participates in the interaction of bcl2 with becn1 and is required for bcl2-mediated depression of endoplasmic reticulum Ca(2+) stores during autophagy. The polypeptide is CDGSH iron-sulfur domain-containing protein 2B (cisd2b) (Salmo salar (Atlantic salmon)).